Reading from the N-terminus, the 118-residue chain is Small ribosomal subunit protein uS13 (118 aa).

Positions 94-118 (SLPLRGQRTKTNARTRKGPRKPIRK) are disordered.

Belongs to the universal ribosomal protein uS13 family. As to quaternary structure, part of the 30S ribosomal subunit. Forms a loose heterodimer with protein S19. Forms two bridges to the 50S subunit in the 70S ribosome.

Located at the top of the head of the 30S subunit, it contacts several helices of the 16S rRNA. In the 70S ribosome it contacts the 23S rRNA (bridge B1a) and protein L5 of the 50S subunit (bridge B1b), connecting the 2 subunits; these bridges are implicated in subunit movement. Contacts the tRNAs in the A and P-sites. In Shewanella sp. (strain W3-18-1), this protein is Small ribosomal subunit protein uS13.